Consider the following 227-residue polypeptide: Phosphoribosylformylglycinamidine synthase subunit PurQ (227 aa).

The 223-residue stretch at 3-225 (FAVIVLPGSN…VKNWRETHVT (223 aa)) folds into the Glutamine amidotransferase type-1 domain. Cysteine 86 (nucleophile) is an active-site residue. Catalysis depends on residues histidine 194 and glutamate 196.

Part of the FGAM synthase complex composed of 1 PurL, 1 PurQ and 2 PurS subunits.

It is found in the cytoplasm. The enzyme catalyses N(2)-formyl-N(1)-(5-phospho-beta-D-ribosyl)glycinamide + L-glutamine + ATP + H2O = 2-formamido-N(1)-(5-O-phospho-beta-D-ribosyl)acetamidine + L-glutamate + ADP + phosphate + H(+). It carries out the reaction L-glutamine + H2O = L-glutamate + NH4(+). It participates in purine metabolism; IMP biosynthesis via de novo pathway; 5-amino-1-(5-phospho-D-ribosyl)imidazole from N(2)-formyl-N(1)-(5-phospho-D-ribosyl)glycinamide: step 1/2. Part of the phosphoribosylformylglycinamidine synthase complex involved in the purines biosynthetic pathway. Catalyzes the ATP-dependent conversion of formylglycinamide ribonucleotide (FGAR) and glutamine to yield formylglycinamidine ribonucleotide (FGAM) and glutamate. The FGAM synthase complex is composed of three subunits. PurQ produces an ammonia molecule by converting glutamine to glutamate. PurL transfers the ammonia molecule to FGAR to form FGAM in an ATP-dependent manner. PurS interacts with PurQ and PurL and is thought to assist in the transfer of the ammonia molecule from PurQ to PurL. The protein is Phosphoribosylformylglycinamidine synthase subunit PurQ of Bacillus subtilis (strain 168).